A 548-amino-acid polypeptide reads, in one-letter code: tRNA (guanine(26)-N(2))-dimethyltransferase (548 aa).

The Trm1 methyltransferase domain maps to 30–470 (ASLTEGSAII…APWSFVWDVL (441 aa)). The S-adenosyl-L-methionine site is built by Arg57, Arg137, Asp155, and Ala186. Zn(2+)-binding residues include Cys317, Cys320, Cys354, and Cys357. Residues 523–548 (QMNPTENWGPKSKPGKRTIAEVDSKS) are disordered.

It belongs to the class I-like SAM-binding methyltransferase superfamily. Trm1 family.

The protein localises to the mitochondrion. Its subcellular location is the nucleus. It localises to the cytoplasm. The catalysed reaction is guanosine(26) in tRNA + 2 S-adenosyl-L-methionine = N(2)-dimethylguanosine(26) in tRNA + 2 S-adenosyl-L-homocysteine + 2 H(+). Its function is as follows. Dimethylates a single guanine residue at position 26 of nuclear- and mitochondrial-encoded tRNAs using S-adenosyl-L-methionine as donor of the methyl groups. Also has tRNA strand annealing and dissociation activity independently of its tRNA guanine-dimethyltransferase activity. This Schizosaccharomyces pombe (strain 972 / ATCC 24843) (Fission yeast) protein is tRNA (guanine(26)-N(2))-dimethyltransferase.